The chain runs to 371 residues: 4-hydroxyphenylpyruvate dioxygenase-like protein (371 aa).

VOC domains follow at residues 7-135 (RLCH…LLER) and 160-328 (RVDH…VFTK). Fe cation contacts are provided by histidine 163, histidine 258, and glutamate 339.

The protein belongs to the 4HPPD family. Requires Fe cation as cofactor.

It localises to the mitochondrion. It catalyses the reaction 3-(4-hydroxyphenyl)pyruvate + O2 = (S)-4-hydroxymandelate + CO2. Functionally, iron-dependent dioxygenase that catalyzes the conversion of 4-hydroxyphenylpyruvate (4-HPPA) to 4-hydroxymandelate (4-HMA) in the mitochondria, one of the steps in the biosynthesis of coenzyme Q10 from tyrosine. The protein is 4-hydroxyphenylpyruvate dioxygenase-like protein of Homo sapiens (Human).